The following is a 79-amino-acid chain: Small ribosomal subunit protein bS16cz (79 aa).

This sequence belongs to the bacterial ribosomal protein bS16 family.

Its subcellular location is the plastid. It is found in the chloroplast. In Arabidopsis thaliana (Mouse-ear cress), this protein is Small ribosomal subunit protein bS16cz.